The primary structure comprises 91 residues: UPF0512 protein E (91 aa).

The segment covering 1–25 (MAIFKSISSISNSTSAMGSSNSTSN) has biased composition (low complexity). Residues 1–26 (MAIFKSISSISNSTSAMGSSNSTSNR) form a disordered region.

This sequence belongs to the UPF0512 family.

This Dictyostelium discoideum (Social amoeba) protein is UPF0512 protein E.